Reading from the N-terminus, the 183-residue chain is Endoribonuclease YbeY (183 aa).

Positions 143, 147, and 153 each coordinate Zn(2+).

Belongs to the endoribonuclease YbeY family. The cofactor is Zn(2+).

It localises to the cytoplasm. Its function is as follows. Single strand-specific metallo-endoribonuclease involved in late-stage 70S ribosome quality control and in maturation of the 3' terminus of the 16S rRNA. This Rickettsia bellii (strain RML369-C) protein is Endoribonuclease YbeY.